Here is a 362-residue protein sequence, read N- to C-terminus: Prostaglandin F2-alpha receptor (362 aa).

The Extracellular portion of the chain corresponds to 1 to 31 (MSTNSSIQPVSPESELLSNTTCQLEEDLSIS). Residues Asn-4 and Asn-19 are each glycosylated (N-linked (GlcNAc...) asparagine). The chain crosses the membrane as a helical span at residues 32 to 54 (FSIIFMTVGILSNSLAIAILMKA). The Cytoplasmic portion of the chain corresponds to 55-69 (YQRFRQKYKSSFLLL). A helical membrane pass occupies residues 70-90 (ASALVITDFFGHLINGTIAVF). Over 91–109 (VYASDKDWIYFDKSNILCS) the chain is Extracellular. An intrachain disulfide couples Cys-108 to Cys-186. Residues 110 to 131 (IFGICMVFSGLCPLFLGSLMAI) form a helical membrane-spanning segment. Residues 132–152 (ERCIGVTKPIFHSTKITTKHV) lie on the Cytoplasmic side of the membrane. The helical transmembrane segment at 153-175 (KMMLSGVCFFAVFVALLPILGHR) threads the bilayer. Over 176-198 (DYKIQASRTWCFYKTDEIKDWED) the chain is Extracellular. The helical transmembrane segment at 199-224 (RFYLLLFAFLGLLALGISFVCNAITG) threads the bilayer. Over 225–250 (ISLLKVKFRSQQHRQGRSHHFEMVIQ) the chain is Cytoplasmic. The chain crosses the membrane as a helical span at residues 251-267 (LLGIMCVSCICWSPFLV). The Extracellular portion of the chain corresponds to 268 to 285 (TMASIGMNIQDFKDSCER). Residues 286–307 (TLFTLRMATWNQILDPWVYILL) traverse the membrane as a helical segment. Residues 308 to 362 (RKAVLRNLYVCTRRCCGVHVISLHVWELSSIKDSLKVAAISDLPVTEKVTQQTST) are Cytoplasmic-facing.

It belongs to the G-protein coupled receptor 1 family.

It is found in the cell membrane. Its function is as follows. Receptor for prostaglandin F2-alpha (PGF2-alpha). The activity of this receptor is mediated by G proteins which activate a phosphatidylinositol-calcium second messenger system. Initiates luteolysis in the corpus luteum. This chain is Prostaglandin F2-alpha receptor (PTGFR), found in Bos taurus (Bovine).